We begin with the raw amino-acid sequence, 997 residues long: Malignant fibrous histiocytoma-amplified sequence 1 homolog (997 aa).

14 LRR repeats span residues 32-53, 54-76, 79-100, 102-123, 125-146, 148-170, 171-192, 194-216, 218-239, 241-262, 264-286, 287-308, 310-331, and 333-354; these read SLRQ…ADLG, DVEV…QSLS, NLHV…VYHL, RLTE…VGLL, KLKK…LGML, DLEE…QGLP, SLRT…LFHV, ALEE…IRSM, SLKI…ICEL, NLES…FGAL, KLKM…LQLV, DLEE…ISCM, KLVT…IVEL, and FLEE…FGKL. Residues 393 to 626 form the Roc domain; that stretch reads QPAVKPRLKL…EKLLSVAEHR (234 aa). The 225-residue stretch at 637-861 folds into the COR domain; that stretch reads PKSWQMLEEL…RFSVQINSHI (225 aa).

It is found in the cytoplasm. Probable GTP-binding protein. Functions in innate immunity and more specifically the inflammatory response as a regulator of the Toll-like receptor TLR2 and TLR4 signaling pathways. This chain is Malignant fibrous histiocytoma-amplified sequence 1 homolog (mfhas1), found in Xenopus tropicalis (Western clawed frog).